Here is a 132-residue protein sequence, read N- to C-terminus: Phosphoribosyl-AMP cyclohydrolase (132 aa).

Asp85 lines the Mg(2+) pocket. Cys86 contacts Zn(2+). Mg(2+) contacts are provided by Asp87 and Asp89. Positions 102 and 109 each coordinate Zn(2+).

Belongs to the PRA-CH family. As to quaternary structure, homodimer. Mg(2+) serves as cofactor. The cofactor is Zn(2+).

The protein localises to the cytoplasm. It carries out the reaction 1-(5-phospho-beta-D-ribosyl)-5'-AMP + H2O = 1-(5-phospho-beta-D-ribosyl)-5-[(5-phospho-beta-D-ribosylamino)methylideneamino]imidazole-4-carboxamide. The protein operates within amino-acid biosynthesis; L-histidine biosynthesis; L-histidine from 5-phospho-alpha-D-ribose 1-diphosphate: step 3/9. Catalyzes the hydrolysis of the adenine ring of phosphoribosyl-AMP. This Frankia alni (strain DSM 45986 / CECT 9034 / ACN14a) protein is Phosphoribosyl-AMP cyclohydrolase.